The chain runs to 284 residues: MNTFFLSLLSGAAAGTSTDLVFFPIDTIKTRLQAKGGFFANGGYKGIYRGLGSAVVASAPGASLFFISYDYMKVKSRPYISKLYSQGSEQLIDTTTHMLSSSIGEICACLVRVPAEVVKQRTQVHSTNSSWQTLQSILRNDNKEGLRKNLYRGWSTTIMREIPFTCIQFPLYEYLKKTWAKANGQSQVEPWKGAICGSIAGGIAAATTTPLDFLKTRLMLNKTTASLGSVIIRIYREEGPAVFFSGVGPRTMWISAGGAIFLGMYETVHSLLSKSFPTAGEMRA.

3 Solcar repeats span residues N2–K75, I92–T178, and K192–L271. 6 helical membrane-spanning segments follow: residues F5–I25, G50–D70, M98–V118, G153–F169, A194–L214, and M252–L272.

It belongs to the mitochondrial carrier (TC 2.A.29) family.

Its subcellular location is the mitochondrion inner membrane. The sequence is that of Putative mitochondrial carrier protein PET8 (PET8) from Saccharomyces cerevisiae (strain ATCC 204508 / S288c) (Baker's yeast).